The sequence spans 421 residues: Zinc finger protein Pegasus (421 aa).

The disordered stretch occupies residues 35–55 (GDKEAETLQGAGTEGDQNGLD). C2H2-type zinc fingers lie at residues 82–104 (LKCRYCNYASKGTARLIEHIRIH), 110–132 (HRCHLCPFASAYERHLEAHMRSH), and 138–161 (YKCELCSFRCSDRSNLSHHRRRKH). Positions 229–238 (SMTKSSQTSG) are enriched in polar residues. Disordered stretches follow at residues 229–249 (SMTKSSQTSGLPRDPQDLMVD) and 292–358 (QPAT…PTLP). Low complexity predominate over residues 292–313 (QPATPAVVSSVSASIAQSSSPT). Positions 339-351 (HTSTPSISNSQPS) are enriched in polar residues. C2H2-type zinc fingers lie at residues 366-388 (HHCQHCDMYFADNILYTIHMGCH) and 394-418 (FQCNICGCKCKNKYDFACHFARGQH).

It belongs to the Ikaros C2H2-type zinc-finger protein family. Probably self-associates.

The protein localises to the nucleus. Functionally, transcriptional repressor that binds the core 5'GNNTGTNG-3' DNA consensus sequence. In Gallus gallus (Chicken), this protein is Zinc finger protein Pegasus (IKZF5).